Consider the following 662-residue polypeptide: Bifunctional polymyxin resistance protein ArnA (662 aa).

Residues 1–307 are formyltransferase ArnAFT; the sequence is MTSKAVVFAY…ELGLVEGARL (307 aa). Catalysis depends on His106, which acts as the Proton donor; for formyltransferase activity. (6R)-10-formyltetrahydrofolate is bound by residues Arg116 and 138 to 142; that span reads IERAD. Residues 316–662 are dehydrogenase ArnADH; sequence RRTRVLILGV…EALREREAQA (347 aa). Residues Asp349 and 370–371 contribute to the NAD(+) site; that span reads DI. Residues Ala395, Tyr400, and 434–435 each bind UDP-alpha-D-glucuronate; that span reads TS. Glu436 (proton acceptor; for decarboxylase activity) is an active-site residue. UDP-alpha-D-glucuronate contacts are provided by residues Arg462, Asn493, 527–536, and Tyr614; that span reads RLVDGGAQKR. Catalysis depends on Arg620, which acts as the Proton donor; for decarboxylase activity.

The protein in the N-terminal section; belongs to the Fmt family. UDP-L-Ara4N formyltransferase subfamily. In the C-terminal section; belongs to the NAD(P)-dependent epimerase/dehydratase family. UDP-glucuronic acid decarboxylase subfamily. Homohexamer, formed by a dimer of trimers.

It catalyses the reaction UDP-alpha-D-glucuronate + NAD(+) = UDP-beta-L-threo-pentopyranos-4-ulose + CO2 + NADH. The catalysed reaction is UDP-4-amino-4-deoxy-beta-L-arabinose + (6R)-10-formyltetrahydrofolate = UDP-4-deoxy-4-formamido-beta-L-arabinose + (6S)-5,6,7,8-tetrahydrofolate + H(+). It functions in the pathway nucleotide-sugar biosynthesis; UDP-4-deoxy-4-formamido-beta-L-arabinose biosynthesis; UDP-4-deoxy-4-formamido-beta-L-arabinose from UDP-alpha-D-glucuronate: step 1/3. Its pathway is nucleotide-sugar biosynthesis; UDP-4-deoxy-4-formamido-beta-L-arabinose biosynthesis; UDP-4-deoxy-4-formamido-beta-L-arabinose from UDP-alpha-D-glucuronate: step 3/3. The protein operates within bacterial outer membrane biogenesis; lipopolysaccharide biosynthesis. Bifunctional enzyme that catalyzes the oxidative decarboxylation of UDP-glucuronic acid (UDP-GlcUA) to UDP-4-keto-arabinose (UDP-Ara4O) and the addition of a formyl group to UDP-4-amino-4-deoxy-L-arabinose (UDP-L-Ara4N) to form UDP-L-4-formamido-arabinose (UDP-L-Ara4FN). The modified arabinose is attached to lipid A and is required for resistance to polymyxin and cationic antimicrobial peptides. The protein is Bifunctional polymyxin resistance protein ArnA of Pseudomonas aeruginosa (strain ATCC 15692 / DSM 22644 / CIP 104116 / JCM 14847 / LMG 12228 / 1C / PRS 101 / PAO1).